We begin with the raw amino-acid sequence, 392 residues long: Hercynylcysteine sulfoxide lyase (392 aa).

Position 219 is an N6-(pyridoxal phosphate)lysine (Lys-219).

This sequence belongs to the class-V pyridoxal-phosphate-dependent aminotransferase family. EgtE subfamily. Pyridoxal 5'-phosphate serves as cofactor.

The protein localises to the cytoplasm. The protein resides in the nucleus. The enzyme catalyses S-(hercyn-2-yl)-L-cysteine S-oxide + AH2 + H(+) = ergothioneine + pyruvate + A + NH4(+). It functions in the pathway amino-acid biosynthesis; ergothioneine biosynthesis. Its function is as follows. Catalyzes the conversion of hercynylcysteine sulfoxide to ergothioneine by cleaving the cysteine residue at the sulfur atom, the last step in the biosynthesis pathway of ergothioneine. This is Hercynylcysteine sulfoxide lyase from Schizosaccharomyces pombe (strain 972 / ATCC 24843) (Fission yeast).